A 67-amino-acid polypeptide reads, in one-letter code: DNA-directed RNA polymerase subunit omega (67 aa).

The protein belongs to the RNA polymerase subunit omega family. The RNAP catalytic core consists of 2 alpha, 1 beta, 1 beta' and 1 omega subunit. When a sigma factor is associated with the core the holoenzyme is formed, which can initiate transcription.

The catalysed reaction is RNA(n) + a ribonucleoside 5'-triphosphate = RNA(n+1) + diphosphate. Promotes RNA polymerase assembly. Latches the N- and C-terminal regions of the beta' subunit thereby facilitating its interaction with the beta and alpha subunits. In Listeria innocua serovar 6a (strain ATCC BAA-680 / CLIP 11262), this protein is DNA-directed RNA polymerase subunit omega.